The following is an 804-amino-acid chain: Phenylalanine--tRNA ligase beta subunit (804 aa).

A tRNA-binding domain is found at 40-155 (DRGMKGVVIG…SDAPIGADAI (116 aa)). The region spanning 409 to 484 (QDSVVVTVTL…RLYGYDRLPA (76 aa)) is the B5 domain. Residues D462, D468, E471, and E472 each coordinate Mg(2+). One can recognise an FDX-ACB domain in the interval 710–803 (PRFPSVVRDI…VEKQFGAVLR (94 aa)).

It belongs to the phenylalanyl-tRNA synthetase beta subunit family. Type 1 subfamily. Tetramer of two alpha and two beta subunits. The cofactor is Mg(2+).

Its subcellular location is the cytoplasm. The enzyme catalyses tRNA(Phe) + L-phenylalanine + ATP = L-phenylalanyl-tRNA(Phe) + AMP + diphosphate + H(+). This Geobacillus kaustophilus (strain HTA426) protein is Phenylalanine--tRNA ligase beta subunit.